Reading from the N-terminus, the 37-residue chain is Cytochrome b6-f complex subunit 5 (37 aa).

Residues 5–25 (LLSGIVLGLIPITLAGLFVTA) form a helical membrane-spanning segment.

This sequence belongs to the PetG family. The 4 large subunits of the cytochrome b6-f complex are cytochrome b6, subunit IV (17 kDa polypeptide, PetD), cytochrome f and the Rieske protein, while the 4 small subunits are PetG, PetL, PetM and PetN. The complex functions as a dimer.

It localises to the plastid. The protein resides in the chloroplast thylakoid membrane. In terms of biological role, component of the cytochrome b6-f complex, which mediates electron transfer between photosystem II (PSII) and photosystem I (PSI), cyclic electron flow around PSI, and state transitions. PetG is required for either the stability or assembly of the cytochrome b6-f complex. The protein is Cytochrome b6-f complex subunit 5 of Angiopteris evecta (Mule's foot fern).